The following is a 541-amino-acid chain: Arginine--tRNA ligase (541 aa).

The short motif at 123–133 is the 'HIGH' region element; that stretch reads ANPTGFLHIGH.

The protein belongs to the class-I aminoacyl-tRNA synthetase family. In terms of assembly, monomer.

It is found in the cytoplasm. It carries out the reaction tRNA(Arg) + L-arginine + ATP = L-arginyl-tRNA(Arg) + AMP + diphosphate. This chain is Arginine--tRNA ligase, found in Metamycoplasma arthritidis (strain 158L3-1) (Mycoplasma arthritidis).